Reading from the N-terminus, the 578-residue chain is Arginine--tRNA ligase (578 aa).

A 'HIGH' region motif is present at residues 127-137 (PNLAKEMHVGH).

Belongs to the class-I aminoacyl-tRNA synthetase family. Monomer.

Its subcellular location is the cytoplasm. It carries out the reaction tRNA(Arg) + L-arginine + ATP = L-arginyl-tRNA(Arg) + AMP + diphosphate. The sequence is that of Arginine--tRNA ligase from Pseudomonas putida (strain GB-1).